Reading from the N-terminus, the 185-residue chain is Elongation factor P (185 aa).

It belongs to the elongation factor P family.

It localises to the cytoplasm. The protein operates within protein biosynthesis; polypeptide chain elongation. Functionally, involved in peptide bond synthesis. Stimulates efficient translation and peptide-bond synthesis on native or reconstituted 70S ribosomes in vitro. Probably functions indirectly by altering the affinity of the ribosome for aminoacyl-tRNA, thus increasing their reactivity as acceptors for peptidyl transferase. The sequence is that of Elongation factor P from Clostridium botulinum (strain Alaska E43 / Type E3).